A 274-amino-acid chain; its full sequence is MRDLHAKKQRVPHNRVKKPPKERKPINWGPILKFASRGFGGAALCAGLGFGGWQLYNLVSRTTLLRLEAIEVSPLKRVSREEIITLAGVRPGDSMLKVDLKTVVARLSKNPWLEEVQVRRYFPHTLSITVSERAPQAVANVGCLYYLDDKGVLFKSLVEGDRLDYPLITGFTEEELAQDPKGCQEALKNALALIDTLKNGGVFSLEDISEIHYSKGYGFTLFTMQGGVPVKLGNGGFGEKLTRLAGIYKELQPQMQALDYIDLDYADKIIVKKV.

The segment at 1 to 24 (MRDLHAKKQRVPHNRVKKPPKERK) is disordered. Residues 1 to 33 (MRDLHAKKQRVPHNRVKKPPKERKPINWGPILK) are Cytoplasmic-facing. Residues 7–21 (KKQRVPHNRVKKPPK) show a composition bias toward basic residues. Residues 34 to 56 (FASRGFGGAALCAGLGFGGWQLY) form a helical membrane-spanning segment. Residues 57–274 (NLVSRTTLLR…YADKIIVKKV (218 aa)) lie on the Periplasmic side of the membrane. A POTRA domain is found at 65-133 (LRLEAIEVSP…HTLSITVSER (69 aa)).

Belongs to the FtsQ/DivIB family. FtsQ subfamily.

It is found in the cell inner membrane. Essential cell division protein. This chain is Cell division protein FtsQ, found in Geobacter sp. (strain M21).